The chain runs to 669 residues: Protein adenylyltransferase SelO, mitochondrial (669 aa).

The N-terminal 115 residues, 1 to 115 (MAVYRAALGA…LGLGAPPARE (115 aa)), are a transit peptide targeting the mitochondrion. ATP-binding residues include G153, G155, K176, D188, G189, R246, and R253. D338 serves as the catalytic Proton acceptor. 2 residues coordinate Mg(2+): N339 and D348. D348 contributes to the ATP binding site. The segment at 634–654 (ATDAEATEADGADGRQRSYSS) is disordered. T635 bears the Phosphothreonine mark. A Phosphoserine modification is found at S653. Residue U667 is a non-standard amino acid, selenocysteine.

Belongs to the SELO family. The cofactor is Mg(2+).

It localises to the mitochondrion. The enzyme catalyses L-tyrosyl-[protein] + ATP = O-(5'-adenylyl)-L-tyrosyl-[protein] + diphosphate. It carries out the reaction L-threonyl-[protein] + ATP = 3-O-(5'-adenylyl)-L-threonyl-[protein] + diphosphate. It catalyses the reaction L-seryl-[protein] + ATP = 3-O-(5'-adenylyl)-L-seryl-[protein] + diphosphate. Its function is as follows. Catalyzes the transfer of adenosine 5'-monophosphate (AMP) to Ser, Thr and Tyr residues of target proteins (AMPylation). May be a redox-active mitochondrial selenoprotein which interacts with a redox target protein. The protein is Protein adenylyltransferase SelO, mitochondrial of Homo sapiens (Human).